A 114-amino-acid chain; its full sequence is T cell receptor beta variable 5-6 (114 aa).

The N-terminal stretch at 1–21 (MGPGLLCWALLCLLGAGLVDA) is a signal peptide. One can recognise an Ig-like domain in the interval 22–114 (GVTQSPTHLI…SALYLCASSL (93 aa)). Residues Cys42 and Cys110 are joined by a disulfide bond. N-linked (GlcNAc...) asparagine glycosylation occurs at Asn90.

In terms of assembly, alpha-beta TR is a heterodimer composed of an alpha and beta chain; disulfide-linked. The alpha-beta TR is associated with the transmembrane signaling CD3 coreceptor proteins to form the TR-CD3 (TcR or TCR). The assembly of alpha-beta TR heterodimers with CD3 occurs in the endoplasmic reticulum where a single alpha-beta TR heterodimer associates with one CD3D-CD3E heterodimer, one CD3G-CD3E heterodimer and one CD247 homodimer forming a stable octameric structure. CD3D-CD3E and CD3G-CD3E heterodimers preferentially associate with TR alpha and TR beta chains, respectively. The association of the CD247 homodimer is the last step of TcR assembly in the endoplasmic reticulum and is required for transport to the cell surface.

Its subcellular location is the cell membrane. Its function is as follows. V region of the variable domain of T cell receptor (TR) beta chain that participates in the antigen recognition. Alpha-beta T cell receptors are antigen specific receptors which are essential to the immune response and are present on the cell surface of T lymphocytes. Recognize peptide-major histocompatibility (MH) (pMH) complexes that are displayed by antigen presenting cells (APC), a prerequisite for efficient T cell adaptive immunity against pathogens. Binding of alpha-beta TR to pMH complex initiates TR-CD3 clustering on the cell surface and intracellular activation of LCK that phosphorylates the ITAM motifs of CD3G, CD3D, CD3E and CD247 enabling the recruitment of ZAP70. In turn ZAP70 phosphorylates LAT, which recruits numerous signaling molecules to form the LAT signalosome. The LAT signalosome propagates signal branching to three major signaling pathways, the calcium, the mitogen-activated protein kinase (MAPK) kinase and the nuclear factor NF-kappa-B (NF-kB) pathways, leading to the mobilization of transcription factors that are critical for gene expression and essential for T cell growth and differentiation. The T cell repertoire is generated in the thymus, by V-(D)-J rearrangement. This repertoire is then shaped by intrathymic selection events to generate a peripheral T cell pool of self-MH restricted, non-autoaggressive T cells. Post-thymic interaction of alpha-beta TR with the pMH complexes shapes TR structural and functional avidity. The sequence is that of T cell receptor beta variable 5-6 from Homo sapiens (Human).